Here is a 135-residue protein sequence, read N- to C-terminus: S-protein homolog 7 (135 aa).

A signal peptide spans Met1–Gly20.

It belongs to the plant self-incompatibility (S1) protein family.

The protein resides in the secreted. The chain is S-protein homolog 7 from Arabidopsis thaliana (Mouse-ear cress).